A 1427-amino-acid chain; its full sequence is DNA-directed RNA polymerase subunit beta' (1427 aa).

Residues Cys-70, Cys-72, Cys-85, and Cys-88 each contribute to the Zn(2+) site. Asp-461, Asp-463, and Asp-465 together coordinate Mg(2+). Zn(2+)-binding residues include Cys-809, Cys-882, Cys-889, and Cys-892. The disordered stretch occupies residues 1394–1427 (EAAIGDDPLGKVQGEDFTTDDVMVEERPEGASEE). Residues 1417-1427 (VEERPEGASEE) show a composition bias toward basic and acidic residues.

Belongs to the RNA polymerase beta' chain family. The RNAP catalytic core consists of 2 alpha, 1 beta, 1 beta' and 1 omega subunit. When a sigma factor is associated with the core the holoenzyme is formed, which can initiate transcription. The cofactor is Mg(2+). Requires Zn(2+) as cofactor.

It carries out the reaction RNA(n) + a ribonucleoside 5'-triphosphate = RNA(n+1) + diphosphate. DNA-dependent RNA polymerase catalyzes the transcription of DNA into RNA using the four ribonucleoside triphosphates as substrates. The polypeptide is DNA-directed RNA polymerase subunit beta' (Sphingopyxis alaskensis (strain DSM 13593 / LMG 18877 / RB2256) (Sphingomonas alaskensis)).